Reading from the N-terminus, the 359-residue chain is Putative ankyrin repeat protein R190 (359 aa).

ANK repeat units follow at residues 72 to 103 (RLME…DFRC), 105 to 133 (DCVI…DLNR), 142 to 173 (DEII…SISI), 203 to 234 (LGNL…DINN), 236 to 260 (HEYS…YGLI), 261 to 287 (IHDD…IGHK), and 288 to 317 (PSKQ…DLSD).

This chain is Putative ankyrin repeat protein R190, found in Acanthamoeba polyphaga (Amoeba).